We begin with the raw amino-acid sequence, 262 residues long: 3-methyl-2-oxobutanoate hydroxymethyltransferase (262 aa).

Residues Asp42 and Asp81 each coordinate Mg(2+). 3-methyl-2-oxobutanoate is bound by residues 42–43, Asp81, and Lys110; that span reads DS. Glu112 is a binding site for Mg(2+). The active-site Proton acceptor is the Glu180.

It belongs to the PanB family. Homodecamer; pentamer of dimers. The cofactor is Mg(2+).

The protein resides in the cytoplasm. It catalyses the reaction 3-methyl-2-oxobutanoate + (6R)-5,10-methylene-5,6,7,8-tetrahydrofolate + H2O = 2-dehydropantoate + (6S)-5,6,7,8-tetrahydrofolate. The protein operates within cofactor biosynthesis; (R)-pantothenate biosynthesis; (R)-pantoate from 3-methyl-2-oxobutanoate: step 1/2. Its function is as follows. Catalyzes the reversible reaction in which hydroxymethyl group from 5,10-methylenetetrahydrofolate is transferred onto alpha-ketoisovalerate to form ketopantoate. The chain is 3-methyl-2-oxobutanoate hydroxymethyltransferase from Legionella pneumophila (strain Lens).